Here is a 225-residue protein sequence, read N- to C-terminus: Endoglucanase (225 aa).

An N-terminal signal peptide occupies residues 1–15 (MKVFVVLAAIVAIAN). Catalysis depends on Asp29, which acts as the Nucleophile. Intrachain disulfides connect Cys30–Cys152, Cys31–Cys66, Cys35–Cys103, Cys50–Cys74, Cys104–Cys219, Cys106–Cys209, and Cys176–Cys187. Asn55 carries N-linked (GlcNAc...) asparagine glycosylation. Catalysis depends on Asp138, which acts as the Proton donor.

This sequence belongs to the glycosyl hydrolase 45 (cellulase K) family. In terms of processing, N- and O-glycosylated. Contains hybrid- and complex-type N-glycans.

Its subcellular location is the secreted. It catalyses the reaction Endohydrolysis of (1-&gt;4)-beta-D-glucosidic linkages in cellulose, lichenin and cereal beta-D-glucans.. Its activity is regulated as follows. Activity is not affected by metal ions except Mn(2+), which reduces the activity by 40-50%. However, no significant change in activity in response to 1 mM EDTA. Its function is as follows. Hydrolyzes carboxymethylcellulose (CMC). Also hydrolyzes lichenan and barley beta-1,4-D-glucan. CMC is hydrolyzed majorily to cellobiose (G2), cellotriose (G3) and cellotetraose (G4). Cellohexaose (G6) is hydrolyzed to G4 and G2 with traces of G3. Cellopentaose (G5) is completely hydrolyzed to G2 and G3, and G4 is partially hydrolyzed to G2. Does not hydrolyze G2 or G3. Does not hydrolyze crystalline cellulose, soluble starch, xylan, mannan or laminarin. This chain is Endoglucanase, found in Cryptopygus antarcticus (Antarctic springtail).